Here is a 103-residue protein sequence, read N- to C-terminus: Small ribosomal subunit protein uS10 (103 aa).

It belongs to the universal ribosomal protein uS10 family. In terms of assembly, part of the 30S ribosomal subunit.

In terms of biological role, involved in the binding of tRNA to the ribosomes. The sequence is that of Small ribosomal subunit protein uS10 from Campylobacter hominis (strain ATCC BAA-381 / DSM 21671 / CCUG 45161 / LMG 19568 / NCTC 13146 / CH001A).